A 156-amino-acid polypeptide reads, in one-letter code: Arginine repressor (156 aa).

The protein belongs to the ArgR family.

The protein localises to the cytoplasm. It participates in amino-acid biosynthesis; L-arginine biosynthesis [regulation]. Its function is as follows. Regulates arginine biosynthesis genes. This is Arginine repressor from Shewanella putrefaciens (strain CN-32 / ATCC BAA-453).